We begin with the raw amino-acid sequence, 1037 residues long: MVTINISNPVYFSDIKDVESEFLTSIPNGLTHEEAQNRLSEYGENRLEADSGVSAWKVLLRQVLNAMCVVLILAAALSFGTTDWIEGGVISAIIVLNITVGFIQEYKAEKTMDSLRTLASPMAHVTRSSKTDAIDSHLLVPGDVVVLKTGDVVPADLRLVETVNFETDEALLTGESLPVIKDAHATFQMNEDVPIGDRINLAYSSSIVTKGRAKGICYATGMQTQIGAIAAGLRQKGKLFQRPEKDEPNYRRKLNKYYLKVTSYYVQRVLGLNVGTPLQRKLTVLAYILFCIAIILAIIVMAAHSFHVTNEVSIYAISLGISIIPESLIAVLSITMAMGQKNMSKRRVIVRKLEALEALGGVTDICSDKTGTITQGKMITRRVWIPSYGYLSVDTSDANNPTIGTVSGLEAAMQDVLKEKKQEMKNIDPSNQPSDQFIPLLKTCALCNLSTVNQTETGEWVVKGEPTEIALHVFSKRFNYGKEDLLKTNTFVREYPFDSEIKRMAVIYEDQQGQYTVYAKGAVERILERCSTSNGSTLEEPDRELIIAQMETLAAEGLRVLALATKVIDKADNWETLPRDVAESSLEFVSLVGIYDPPRTESKGAVELCHRAGIRVHMLTGDHPETAKAIAREVGIIPPFISDRDPNMSWMVMTGSQFDALSDEEVDSLKALCLVIARCAPQTKVKMIEALHRRKAFVAMTGDGVNDSPSLKQANVGIAMGQNGSDVAKDASDIVLTDDNFSSIVNAIEEGRRMFDNIMRFVLHLLVSNVGEVILLVVGLAFRDEVHLSVFPMSPVEILWCNMITSSFPSMGLGMELAQPDVMERLPHDNKVGIFQKSLIVDMMVYGFFLGVVSLMTWVVIMYGFGTGNLSYDCNAHYHAGCNDVFKARSAVFAVVTFCILIMAVEVKNFDNSLFNLHGIPWGEWNFRYFLHTLVENKFLAWAIALAAVSVFPTIYIPVINRDVFKHTYIGWEWGVVAVAVMFYFFYVEIWKSIRRSLTNPQKKGKFRRTLSNTITTESKLSEKDLEHRLFLQSRRA.

At 1 to 61 (MVTINISNPV…GVSAWKVLLR (61 aa)) the chain is on the cytoplasmic side. A helical membrane pass occupies residues 62–82 (QVLNAMCVVLILAAALSFGTT). Asp83 is a topological domain (extracellular). The chain crosses the membrane as a helical span at residues 84–104 (WIEGGVISAIIVLNITVGFIQ). The Cytoplasmic portion of the chain corresponds to 105 to 281 (EYKAEKTMDS…LNVGTPLQRK (177 aa)). Residues 282–302 (LTVLAYILFCIAIILAIIVMA) form a helical membrane-spanning segment. At 303–313 (AHSFHVTNEVS) the chain is on the extracellular side. Residues 314–334 (IYAISLGISIIPESLIAVLSI) traverse the membrane as a helical segment. Over 335–760 (TMAMGQKNMS…GRRMFDNIMR (426 aa)) the chain is Cytoplasmic. The 4-aspartylphosphate intermediate role is filled by Asp368. Mg(2+)-binding residues include Asp368 and Thr370. ATP is bound by residues Thr370, Glu468, Lys520, Arg559, Thr620, Gly621, Asp622, Arg678, and Lys684. A Mg(2+)-binding site is contributed by Asp703. Asn706 provides a ligand contact to ATP. The helical transmembrane segment at 761–781 (FVLHLLVSNVGEVILLVVGLA) threads the bilayer. At 782 to 787 (FRDEVH) the chain is on the extracellular side. A helical membrane pass occupies residues 788–808 (LSVFPMSPVEILWCNMITSSF). Residues 809 to 844 (PSMGLGMELAQPDVMERLPHDNKVGIFQKSLIVDMM) lie on the Cytoplasmic side of the membrane. A helical transmembrane segment spans residues 845–865 (VYGFFLGVVSLMTWVVIMYGF). At 866 to 889 (GTGNLSYDCNAHYHAGCNDVFKAR) the chain is on the extracellular side. Asn869 carries an N-linked (GlcNAc...) asparagine glycan. The chain crosses the membrane as a helical span at residues 890–910 (SAVFAVVTFCILIMAVEVKNF). The Cytoplasmic segment spans residues 911–939 (DNSLFNLHGIPWGEWNFRYFLHTLVENKF). The helical transmembrane segment at 940–960 (LAWAIALAAVSVFPTIYIPVI) threads the bilayer. Topologically, residues 961-969 (NRDVFKHTY) are extracellular. The helical transmembrane segment at 970-990 (IGWEWGVVAVAVMFYFFYVEI) threads the bilayer. The Cytoplasmic segment spans residues 991–1037 (WKSIRRSLTNPQKKGKFRRTLSNTITTESKLSEKDLEHRLFLQSRRA). Phosphoserine is present on Ser1012.

Belongs to the cation transport ATPase (P-type) (TC 3.A.3) family. Type IID subfamily. The cofactor is Mg(2+). The active site is phosphorylated in presence of sodium or potassium and in conditions of higher pH. Not phosphorylated in presence of calcium ions.

The protein resides in the cell membrane. The enzyme catalyses Na(+)(in) + ATP + H2O = Na(+)(out) + ADP + phosphate + H(+). It catalyses the reaction K(+)(in) + ATP + H2O = K(+)(out) + ADP + phosphate + H(+). Its function is as follows. Catalyzes the hydrolysis of ATP coupled with the export of sodium and potassium from the cell. May export sodium less efficiently. May transport other cations such as lithium. Sodium/potassium efflux ATPases are involved in salt tolerance and maintaining the membrane potential across the plasma membrane in high salinity (Na+) or alkaline (K+) environments. This chain is Sodium/potassium exporting P-type ATPase cta3, found in Schizosaccharomyces pombe (strain 972 / ATCC 24843) (Fission yeast).